Reading from the N-terminus, the 78-residue chain is MGAGLPLVLLLTLVGSSQGAGPGMTLQLKLKNSLLANSSYNSSFLDFLQKFCLLLHLPLGTNVTLHQAGSSQHVTCRV.

The N-terminal stretch at 1 to 19 (MGAGLPLVLLLTLVGSSQG) is a signal peptide. N-linked (GlcNAc...) asparagine glycosylation occurs at Asn-37.

Post-translationally, N-glycosylated.

The protein localises to the secreted. Its subcellular location is the cytoplasmic vesicle. It is found in the secretory vesicle. The protein resides in the golgi apparatus. Functionally, putative surfactant protein. In Bos taurus (Bovine), this protein is Surfactant-associated protein 2 (SFTA2).